The primary structure comprises 707 residues: Alpha-hemolysin translocation ATP-binding protein HlyB (707 aa).

Residues 2-125 (DFHHKNNYGL…DLYQGNIILI (124 aa)) enclose the Peptidase C39 domain. Residue His-83 is part of the active site. Residues 154–436 (FIETLIVSVF…LAQLWQDFQQ (283 aa)) enclose the ABC transmembrane type-1 domain. 5 helical membrane-spanning segments follow: residues 158-178 (LIVSVFLQLFALITPLFFQVV), 191-211 (LNIITIALAVVAIFEITLSGL), 269-289 (ALTSILDLLFSFIFFAVMWYY), 295-315 (LVILFSLPCYATWSIFISPIL), and 387-407 (AVMIINLWLGAHLVISGDLSI). The ABC transporter domain maps to 468–703 (ISFRNIRFRY…PESLYHYLHQ (236 aa)). 502-509 (GRSGSGKS) provides a ligand contact to ATP.

It belongs to the ABC transporter superfamily. Protein-1 exporter (TC 3.A.1.109) family.

Its subcellular location is the cell membrane. Involved in the export of hemolysin A. The protein is Alpha-hemolysin translocation ATP-binding protein HlyB (hlyB) of Proteus vulgaris.